Consider the following 257-residue polypeptide: Ribosomal RNA small subunit methyltransferase A (257 aa).

Residues H12, L14, G39, E60, D83, and N101 each contribute to the S-adenosyl-L-methionine site.

It belongs to the class I-like SAM-binding methyltransferase superfamily. rRNA adenine N(6)-methyltransferase family. RsmA subfamily.

It is found in the cytoplasm. It carries out the reaction adenosine(1518)/adenosine(1519) in 16S rRNA + 4 S-adenosyl-L-methionine = N(6)-dimethyladenosine(1518)/N(6)-dimethyladenosine(1519) in 16S rRNA + 4 S-adenosyl-L-homocysteine + 4 H(+). Functionally, specifically dimethylates two adjacent adenosines (A1518 and A1519) in the loop of a conserved hairpin near the 3'-end of 16S rRNA in the 30S particle. May play a critical role in biogenesis of 30S subunits. The sequence is that of Ribosomal RNA small subunit methyltransferase A from Nitrosomonas europaea (strain ATCC 19718 / CIP 103999 / KCTC 2705 / NBRC 14298).